A 132-amino-acid chain; its full sequence is Ribosome-binding factor A (132 aa).

Belongs to the RbfA family. As to quaternary structure, monomer. Binds 30S ribosomal subunits, but not 50S ribosomal subunits or 70S ribosomes.

The protein localises to the cytoplasm. In terms of biological role, one of several proteins that assist in the late maturation steps of the functional core of the 30S ribosomal subunit. Associates with free 30S ribosomal subunits (but not with 30S subunits that are part of 70S ribosomes or polysomes). Required for efficient processing of 16S rRNA. May interact with the 5'-terminal helix region of 16S rRNA. This is Ribosome-binding factor A from Edwardsiella ictaluri (strain 93-146).